We begin with the raw amino-acid sequence, 173 residues long: Glucagon family neuropeptides (173 aa).

Positions 1–22 are cleaved as a signal peptide; the sequence is MSSKATLALLIYGIIMHYSVYS. Positions 23–80 are excised as a propeptide; the sequence is SPLGLNYPNLRLENEVYDEDGNSLPALAFDSDQIAIRSPPSVADDLYTLYYPPEKGTE. At Lys166 the chain carries Lysine amide. Residues 170–173 constitute a propeptide that is removed on maturation; the sequence is LGYL.

The protein belongs to the glucagon family.

It localises to the secreted. Primary role of GHRH is to release GH from the pituitary. In terms of biological role, PACAP plays pivotal roles as a neurotransmitter and/or a neuromodulator. The sequence is that of Glucagon family neuropeptides from Oncorhynchus nerka (Sockeye salmon).